The primary structure comprises 308 residues: Pseudouridine-5'-phosphate glycosidase (308 aa).

Glu-29 acts as the Proton donor in catalysis. Substrate-binding residues include Lys-90 and Val-110. Residue Asp-142 coordinates Mn(2+). 144-146 contacts substrate; the sequence is SSD. Lys-163 serves as the catalytic Nucleophile.

The protein belongs to the pseudouridine-5'-phosphate glycosidase family. Homotrimer. The cofactor is Mn(2+).

The catalysed reaction is D-ribose 5-phosphate + uracil = psi-UMP + H2O. Functionally, catalyzes the reversible cleavage of pseudouridine 5'-phosphate (PsiMP) to ribose 5-phosphate and uracil. Functions biologically in the cleavage direction, as part of a pseudouridine degradation pathway. This chain is Pseudouridine-5'-phosphate glycosidase, found in Serratia proteamaculans (strain 568).